Consider the following 296-residue polypeptide: N-acetylmuramic acid 6-phosphate etherase (296 aa).

The SIS domain maps to 54 to 217; it reads VISCFQKGGR…STASMVGIGK (164 aa). The active-site Proton donor is the E82. E113 is an active-site residue.

The protein belongs to the GCKR-like family. MurNAc-6-P etherase subfamily. As to quaternary structure, homodimer.

It carries out the reaction N-acetyl-D-muramate 6-phosphate + H2O = N-acetyl-D-glucosamine 6-phosphate + (R)-lactate. Its pathway is amino-sugar metabolism; N-acetylmuramate degradation. Specifically catalyzes the cleavage of the D-lactyl ether substituent of MurNAc 6-phosphate, producing GlcNAc 6-phosphate and D-lactate. In Listeria monocytogenes serotype 4b (strain CLIP80459), this protein is N-acetylmuramic acid 6-phosphate etherase.